Reading from the N-terminus, the 443-residue chain is Probable D-serine dehydratase (443 aa).

N6-(pyridoxal phosphate)lysine is present on K118.

Belongs to the serine/threonine dehydratase family. DsdA subfamily. Pyridoxal 5'-phosphate is required as a cofactor.

It catalyses the reaction D-serine = pyruvate + NH4(+). This is Probable D-serine dehydratase from Vibrio parahaemolyticus serotype O3:K6 (strain RIMD 2210633).